A 240-amino-acid polypeptide reads, in one-letter code: Mediator of RNA polymerase II transcription subunit 19-B (240 aa).

Residues 1–14 (MTEIFSSLYGQPDS) are compositionally biased toward polar residues. 2 disordered regions span residues 1 to 29 (MTEI…GSGK) and 168 to 240 (PKKK…SSLR). Composition is skewed to basic residues over residues 168-180 (PKKK…KHHR) and 209-221 (KKKK…KKNR).

This sequence belongs to the Mediator complex subunit 19 family. In terms of assembly, component of the Mediator complex.

The protein resides in the nucleus. In terms of biological role, component of the Mediator complex, a coactivator involved in the regulated transcription of nearly all RNA polymerase II-dependent genes. Mediator functions as a bridge to convey information from gene-specific regulatory proteins to the basal RNA polymerase II transcription machinery. Mediator is recruited to promoters by direct interactions with regulatory proteins and serves as a scaffold for the assembly of a functional preinitiation complex with RNA polymerase II and the general transcription factors. This Danio rerio (Zebrafish) protein is Mediator of RNA polymerase II transcription subunit 19-B (med19b).